Consider the following 399-residue polypeptide: Bombesin receptor subtype-3 (399 aa).

Over residues 1-31 the composition is skewed to polar residues; it reads MSQRQPQSPNQTLISTTNDTESSSSVVPNDS. Residues 1–38 form a disordered region; the sequence is MSQRQPQSPNQTLISTTNDTESSSSVVPNDSTNKRRTG. Topologically, residues 1-41 are extracellular; it reads MSQRQPQSPNQTLISTTNDTESSSSVVPNDSTNKRRTGDNS. 3 N-linked (GlcNAc...) asparagine glycosylation sites follow: asparagine 10, asparagine 18, and asparagine 29. The chain crosses the membrane as a helical span at residues 42–63; sequence PGIEALCAIYITYAVIISVGIL. Residues 64 to 82 lie on the Cytoplasmic side of the membrane; sequence GNAILIKVFFKTKSMQTVP. Residues 83–103 form a helical membrane-spanning segment; the sequence is NIFITSLAFGDLLLLLTCVPV. At 104–121 the chain is on the extracellular side; it reads DVTHYLAEGWLFGRIGCK. Cysteine 120 and cysteine 203 are oxidised to a cystine. Residues 122–143 traverse the membrane as a helical segment; it reads VLSFIRLTSVGVSVFTLTILSA. Topologically, residues 144–163 are cytoplasmic; the sequence is DRYKAVVKPLERQPPNAILK. A helical transmembrane segment spans residues 164-184; it reads TCAKAGCIWIMSMIIALPEAI. The Extracellular segment spans residues 185 to 220; it reads FSNVYTFQDPDKNVTFKACASYPVSERLLQEIHSLL. A helical membrane pass occupies residues 221–241; that stretch reads CFLVFYIIPLSIISVYYSLIA. Over 242-272 the chain is Cytoplasmic; sequence RTLYKSTLNIPTEEQRHARKQIESRKRIAKT. Residues 273–293 form a helical membrane-spanning segment; the sequence is VLVLVALFALCWLPNHLLYLY. At 294–313 the chain is on the extracellular side; sequence RSFTSQTYMDSSTVHLFVTI. A helical membrane pass occupies residues 314–333; sequence ISRILAFSNSCVNPFALYWL. Residues 334–399 lie on the Cytoplasmic side of the membrane; it reads SNTFQQHFKA…CSVKKEDDRV (66 aa).

Belongs to the G-protein coupled receptor 1 family. As to quaternary structure, interacts with C6orf89.

The protein resides in the cell membrane. Role in sperm cell division, maturation, or function. This receptor mediates its action by association with G proteins that activate a phosphatidylinositol-calcium second messenger system. This is Bombesin receptor subtype-3 (BRS3) from Ovis aries (Sheep).